We begin with the raw amino-acid sequence, 124 residues long: Small ribosomal subunit protein uS12 (124 aa).

3-methylthioaspartic acid is present on Asp-89. The disordered stretch occupies residues 104-124 (ATGVKDRKQGRSKYGAKRPKE). A compositionally biased stretch (basic residues) spans 113–124 (GRSKYGAKRPKE).

This sequence belongs to the universal ribosomal protein uS12 family. In terms of assembly, part of the 30S ribosomal subunit. Contacts proteins S8 and S17. May interact with IF1 in the 30S initiation complex.

Functionally, with S4 and S5 plays an important role in translational accuracy. Its function is as follows. Interacts with and stabilizes bases of the 16S rRNA that are involved in tRNA selection in the A site and with the mRNA backbone. Located at the interface of the 30S and 50S subunits, it traverses the body of the 30S subunit contacting proteins on the other side and probably holding the rRNA structure together. The combined cluster of proteins S8, S12 and S17 appears to hold together the shoulder and platform of the 30S subunit. This is Small ribosomal subunit protein uS12 from Picosynechococcus sp. (strain ATCC 27264 / PCC 7002 / PR-6) (Agmenellum quadruplicatum).